The chain runs to 218 residues: uncharacterized protein (218 aa).

Residues 111–193 enclose the Toprim domain; sequence NSIYLVEGDF…ITKVIEIKAA (83 aa).

This is an uncharacterized protein from Mycoplasma genitalium (strain ATCC 33530 / DSM 19775 / NCTC 10195 / G37) (Mycoplasmoides genitalium).